The sequence spans 481 residues: GDP-fucose protein O-fucosyltransferase 2 (481 aa).

The N-terminal stretch at 1–22 (MKGRAHIWVALLLACLPPRFRN) is a signal peptide. GDP-beta-L-fucose is bound by residues 59 to 63 (GEGFN), 287 to 289 (HLR), Asp-365, and 382 to 383 (RF). Glu-60 functions as the Proton acceptor in the catalytic mechanism.

This sequence belongs to the glycosyltransferase 68 family.

Its subcellular location is the endoplasmic reticulum. The catalysed reaction is L-seryl-[protein] + GDP-beta-L-fucose = 3-O-(alpha-L-fucosyl)-L-seryl-[protein] + GDP + H(+). The enzyme catalyses L-threonyl-[protein] + GDP-beta-L-fucose = 3-O-(alpha-L-fucosyl)-L-threonyl-[protein] + GDP + H(+). Its pathway is protein modification; protein glycosylation. Its function is as follows. Catalyzes the reaction that attaches fucose through an O-glycosidic linkage to a conserved serine or threonine residue in the consensus sequence C1-X-X-S/T-C2 of thrombospondin type I repeats (TSRs) where C1 and C2 are the first and second cysteines of the repeat, respectively. O-fucosylates sporozoite proteins CSP and TRAP. O-fucosylation regulates stability and intracellular trafficking of TRAP but not of CSP. Probably by regulating protein O-fucosylation, may play a role in parasite transmission to the mosquito vector and/or infection of the vertebrate host hepatocytes; however, POFUT2 involvement in transmission/infection is controversial. The polypeptide is GDP-fucose protein O-fucosyltransferase 2 (Plasmodium vivax (strain Salvador I)).